A 177-amino-acid polypeptide reads, in one-letter code: NAD(P)H-quinone oxidoreductase subunit 6, chloroplastic (177 aa).

5 helical membrane passes run 10–30 (IFLV…VLLT), 32–52 (PVYS…FHIP), 61–81 (AQLL…VMFM), 92–112 (LWTV…FSLI), and 152–172 (FYLP…GAIA).

Belongs to the complex I subunit 6 family. As to quaternary structure, NDH is composed of at least 16 different subunits, 5 of which are encoded in the nucleus.

The protein localises to the plastid. It is found in the chloroplast thylakoid membrane. The catalysed reaction is a plastoquinone + NADH + (n+1) H(+)(in) = a plastoquinol + NAD(+) + n H(+)(out). It carries out the reaction a plastoquinone + NADPH + (n+1) H(+)(in) = a plastoquinol + NADP(+) + n H(+)(out). Its function is as follows. NDH shuttles electrons from NAD(P)H:plastoquinone, via FMN and iron-sulfur (Fe-S) centers, to quinones in the photosynthetic chain and possibly in a chloroplast respiratory chain. The immediate electron acceptor for the enzyme in this species is believed to be plastoquinone. Couples the redox reaction to proton translocation, and thus conserves the redox energy in a proton gradient. The chain is NAD(P)H-quinone oxidoreductase subunit 6, chloroplastic (ndhG) from Illicium oligandrum (Star anise).